A 433-amino-acid chain; its full sequence is UDP-N-acetylmuramoylalanine--D-glutamate ligase (433 aa).

Residue 125–131 (GTSGKTT) coordinates ATP.

It belongs to the MurCDEF family.

The protein resides in the cytoplasm. It catalyses the reaction UDP-N-acetyl-alpha-D-muramoyl-L-alanine + D-glutamate + ATP = UDP-N-acetyl-alpha-D-muramoyl-L-alanyl-D-glutamate + ADP + phosphate + H(+). It participates in cell wall biogenesis; peptidoglycan biosynthesis. Its function is as follows. Cell wall formation. Catalyzes the addition of glutamate to the nucleotide precursor UDP-N-acetylmuramoyl-L-alanine (UMA). In Nitratidesulfovibrio vulgaris (strain ATCC 29579 / DSM 644 / CCUG 34227 / NCIMB 8303 / VKM B-1760 / Hildenborough) (Desulfovibrio vulgaris), this protein is UDP-N-acetylmuramoylalanine--D-glutamate ligase.